We begin with the raw amino-acid sequence, 187 residues long: Large ribosomal subunit protein uL5 (187 aa).

The protein belongs to the universal ribosomal protein uL5 family. In terms of assembly, part of the 50S ribosomal subunit; part of the 5S rRNA/L5/L18/L25 subcomplex. Contacts the 5S rRNA and the P site tRNA. Forms a bridge to the 30S subunit in the 70S ribosome.

Functionally, this is one of the proteins that bind and probably mediate the attachment of the 5S RNA into the large ribosomal subunit, where it forms part of the central protuberance. In the 70S ribosome it contacts protein S13 of the 30S subunit (bridge B1b), connecting the 2 subunits; this bridge is implicated in subunit movement. Contacts the P site tRNA; the 5S rRNA and some of its associated proteins might help stabilize positioning of ribosome-bound tRNAs. This Mycobacteroides abscessus (strain ATCC 19977 / DSM 44196 / CCUG 20993 / CIP 104536 / JCM 13569 / NCTC 13031 / TMC 1543 / L948) (Mycobacterium abscessus) protein is Large ribosomal subunit protein uL5.